A 419-amino-acid polypeptide reads, in one-letter code: UDP-N-acetylglucosamine 1-carboxyvinyltransferase (419 aa).

Phosphoenolpyruvate is bound at residue 22-23 (KN). A UDP-N-acetyl-alpha-D-glucosamine-binding site is contributed by arginine 91. Cysteine 115 (proton donor) is an active-site residue. A 2-(S-cysteinyl)pyruvic acid O-phosphothioketal modification is found at cysteine 115. Residues 120–124 (RPVDL), 160–163 (KVSV), aspartate 305, and valine 327 each bind UDP-N-acetyl-alpha-D-glucosamine.

This sequence belongs to the EPSP synthase family. MurA subfamily.

The protein resides in the cytoplasm. It catalyses the reaction phosphoenolpyruvate + UDP-N-acetyl-alpha-D-glucosamine = UDP-N-acetyl-3-O-(1-carboxyvinyl)-alpha-D-glucosamine + phosphate. The protein operates within cell wall biogenesis; peptidoglycan biosynthesis. Its function is as follows. Cell wall formation. Adds enolpyruvyl to UDP-N-acetylglucosamine. In Escherichia fergusonii (strain ATCC 35469 / DSM 13698 / CCUG 18766 / IAM 14443 / JCM 21226 / LMG 7866 / NBRC 102419 / NCTC 12128 / CDC 0568-73), this protein is UDP-N-acetylglucosamine 1-carboxyvinyltransferase.